We begin with the raw amino-acid sequence, 1503 residues long: Protein Skeletor, isoforms D/E (1503 aa).

The N-terminal stretch at 1-28 (MLAMKDKPWLLLFGLLAALSCLASFGDA) is a signal peptide. 2 DM13 domains span residues 34 to 143 (GTKI…VSIP) and 151 to 258 (PQKI…VRLP). The DOMON domain maps to 287-419 (LAFEVRWAVA…GAESVVWAIG (133 aa)). 4 disordered regions span residues 451 to 491 (PLPE…NVEP), 830 to 857 (NPNL…PTEI), 1086 to 1106 (IFNQ…SSVS), and 1426 to 1503 (EFRG…GRRA). Positions 830-840 (NPNLNPNHPNQ) are enriched in low complexity. Positions 1452-1491 (SSSSGSTIYPYSSSTGASTSTVSSSASSPLSSSSLRPIST) are enriched in low complexity.

As to quaternary structure, interacts with Chro and Mgtor as part of a macromolecular complex forming the spindle matrix. Chro colocalizes with Skeletor (Skel) on the chromosomes at interphase and on spindle during metaphase.

It is found in the cytoplasm. The protein resides in the cytoskeleton. The protein localises to the spindle. It localises to the nucleus. Its subcellular location is the nucleolus. It is found in the chromosome. Functionally, provides structural support to stabilize and organize the microtubule spindle during mitosis (within embryonic somatic cells) and meiosis (within spermatocytes). The role in mitosis regulation depends on the Ran pathway. In Drosophila melanogaster (Fruit fly), this protein is Protein Skeletor, isoforms D/E.